A 566-amino-acid chain; its full sequence is MELETSVYRPNAAVYDSPDGVEVRGRYDQVFAKILTREALGFVAELQRDVSLGMLRYAWSAVERQNVVTTFVLSLGLTLPLSSSEIGEWVCSVCSPPAVADRRVEITGPVERKMIINALNSGAKVFMADFEDALSPSWENLMKGQVNLKDAVDGTITFHDKARNKVYKLNDQVAKLFVRPRGWHLPEAHILIDGEPAIGCLVDFGLYFFHNYSKFRQTQGSGYGPFFYLPKMEHSREAKIWNSVFERAEKMAGIERGSIRATVLIETLPAVFQMNEILYELRDHSVGLNCGRWDYIFSYVKTFQAHPDRLLPDRVLVGMGQHFMRSYSDLLIRTCHKRGVHAWEGMAAQIAIRDDPKANDMALDLVKKDKLRQVRAGHDGTWAAHPGLIPICMDAFGHMGKNPNQIKSMKRDDASAITEEDLLQIPRGVRTLDGLRLNTRVGIQYLAAWLTGSGSVPLYNLTDEDAATAEISRVQNWQWIRYGVELKRRTGLEVRVSKELFGRVVEEEMERIEKEVGKERSLREECIRKLARCLQSSVTAAELDDFLTLAVYDHIVAHYPINVSRL.

The active-site Proton acceptor is arginine 179. Residue aspartate 465 is the Proton donor of the active site. Residues 564 to 566 (SRL) carry the Microbody targeting signal motif.

This sequence belongs to the malate synthase family.

It localises to the glyoxysome. It carries out the reaction glyoxylate + acetyl-CoA + H2O = (S)-malate + CoA + H(+). It participates in carbohydrate metabolism; glyoxylate cycle; (S)-malate from isocitrate: step 2/2. The sequence is that of Malate synthase, glyoxysomal (MLS) from Raphanus sativus (Radish).